The chain runs to 120 residues: MFLLYEYDIFWAFLIISSAIPVLAFLISGVLSPIRKGPEKLSSYESGIDPIGDAWLQFRIRYYMFALVFVVFDVETVFLYPWAMSFDVLGVSAFIEAFIFVLILILGLVYAWRKGALEWS.

The next 3 helical transmembrane spans lie at 9 to 29, 64 to 84, and 88 to 108; these read IFWA…LISG, MFAL…PWAM, and VLGV…ILGL.

The protein belongs to the complex I subunit 3 family. In terms of assembly, NDH is composed of at least 16 different subunits, 5 of which are encoded in the nucleus.

It is found in the plastid. The protein localises to the chloroplast thylakoid membrane. It catalyses the reaction a plastoquinone + NADH + (n+1) H(+)(in) = a plastoquinol + NAD(+) + n H(+)(out). It carries out the reaction a plastoquinone + NADPH + (n+1) H(+)(in) = a plastoquinol + NADP(+) + n H(+)(out). In terms of biological role, NDH shuttles electrons from NAD(P)H:plastoquinone, via FMN and iron-sulfur (Fe-S) centers, to quinones in the photosynthetic chain and possibly in a chloroplast respiratory chain. The immediate electron acceptor for the enzyme in this species is believed to be plastoquinone. Couples the redox reaction to proton translocation, and thus conserves the redox energy in a proton gradient. The polypeptide is NAD(P)H-quinone oxidoreductase subunit 3, chloroplastic (Capsella bursa-pastoris (Shepherd's purse)).